Reading from the N-terminus, the 599-residue chain is Elongation factor 4 (599 aa).

Residues 5–187 form the tr-type G domain; it reads STIRNFAIIA…AIVHRLPAPV (183 aa). GTP contacts are provided by residues 17–22 and 134–137; these read DHGKST and NKAD.

This sequence belongs to the TRAFAC class translation factor GTPase superfamily. Classic translation factor GTPase family. LepA subfamily.

The protein resides in the cell inner membrane. The catalysed reaction is GTP + H2O = GDP + phosphate + H(+). Its function is as follows. Required for accurate and efficient protein synthesis under certain stress conditions. May act as a fidelity factor of the translation reaction, by catalyzing a one-codon backward translocation of tRNAs on improperly translocated ribosomes. Back-translocation proceeds from a post-translocation (POST) complex to a pre-translocation (PRE) complex, thus giving elongation factor G a second chance to translocate the tRNAs correctly. Binds to ribosomes in a GTP-dependent manner. In Anaplasma marginale (strain Florida), this protein is Elongation factor 4.